Here is a 223-residue protein sequence, read N- to C-terminus: UPF0441 protein YgiB (223 aa).

Over residues 178 to 195 (TVPKTAMAPKPATTTTVT) the composition is skewed to low complexity. The tract at residues 178–223 (TVPKTAMAPKPATTTTVTRGGFGESVAKQSTMQRGATGTSSRSMGG) is disordered. The span at 204-223 (AKQSTMQRGATGTSSRSMGG) shows a compositional bias: polar residues.

Belongs to the UPF0441 family.

The sequence is that of UPF0441 protein YgiB from Escherichia coli O6:K15:H31 (strain 536 / UPEC).